A 69-amino-acid chain; its full sequence is Putative transmembrane protein ORF34 (69 aa).

The next 2 helical transmembrane spans lie at 7-27 (LLSVLAIIFYGVMVVGSMMQF) and 42-62 (VSLMLVGICAVVCFYASIVYF).

It localises to the host membrane. The sequence is that of Putative transmembrane protein ORF34 from Haloarcula hispanica (His1V).